The primary structure comprises 118 residues: Altered inheritance of mitochondria protein 26, mitochondrial (118 aa).

3 consecutive transmembrane segments (helical) span residues 7–27 (EHLLLSQLKGSFFLLLLAYFF), 41–61 (LAVTPGAITIAIAIATDSIPA), and 98–118 (FLFCLGSARFCISFPCFGLSI).

The protein localises to the mitochondrion membrane. Functionally, involved in selective mitochondria autophagy (mitophagy). This Saccharomyces cerevisiae (strain ATCC 204508 / S288c) (Baker's yeast) protein is Altered inheritance of mitochondria protein 26, mitochondrial (AIM26).